The sequence spans 1032 residues: Contactin-1a (1032 aa).

Positions 1–31 are cleaved as a signal peptide; sequence MIPEAFQPRAMKHTTTVLMLALSSRFWSVCA. Ig-like C2-type domains are found at residues 46–139, 144–231, 249–335, 340–417, 423–510, and 515–612; these read PVFE…ARVQ, DMFS…KSVF, PADI…THLY, PDWL…AELR, PSFQ…GSLS, and TKIT…AELV. Disulfide bonds link C70/C122 and C166/C219. 3 N-linked (GlcNAc...) asparagine glycosylation sites follow: N119, N216, and N266. 3 disulfide bridges follow: C271–C319, C361–C401, and C446–C494. 4 N-linked (GlcNAc...) asparagine glycosylation sites follow: N455, N467, N483, and N504. C536 and C596 are disulfide-bonded. The N-linked (GlcNAc...) asparagine glycan is linked to N604. 4 consecutive Fibronectin type-III domains span residues 619–718, 723–820, 825–918, and 920–1015; these read PPGG…TREA, APSD…SAQD, APII…TKKS, and PSRP…APAP. A disordered region spans residues 699-729; sequence NTLGTGPPSEPSPKTTTREARPIVAPSDIGG. N879 carries an N-linked (GlcNAc...) asparagine glycan. The disordered stretch occupies residues 907-926; sequence ASQRNRIYTKKSPPSRPPKI. The N-linked (GlcNAc...) asparagine glycan is linked to N950. G1010 carries the GPI-anchor amidated glycine lipid modification. Positions 1011–1032 are cleaved as a propeptide — removed in mature form; it reads SAPAPALASALLLLPLLWTLML.

Belongs to the immunoglobulin superfamily. Contactin family. As to expression, expressed in brain.

Its subcellular location is the cell membrane. Mediates cell surface interactions during nervous system development. The sequence is that of Contactin-1a (cntn1a) from Danio rerio (Zebrafish).